Consider the following 195-residue polypeptide: Imidazoleglycerol-phosphate dehydratase (195 aa).

Belongs to the imidazoleglycerol-phosphate dehydratase family.

It is found in the cytoplasm. The enzyme catalyses D-erythro-1-(imidazol-4-yl)glycerol 3-phosphate = 3-(imidazol-4-yl)-2-oxopropyl phosphate + H2O. The protein operates within amino-acid biosynthesis; L-histidine biosynthesis; L-histidine from 5-phospho-alpha-D-ribose 1-diphosphate: step 6/9. The polypeptide is Imidazoleglycerol-phosphate dehydratase (Burkholderia thailandensis (strain ATCC 700388 / DSM 13276 / CCUG 48851 / CIP 106301 / E264)).